The sequence spans 339 residues: Anthranilate phosphoribosyltransferase (339 aa).

Residues G82, 85 to 86 (GD), 92 to 95 (NIST), 110 to 118 (KHGNSSISS), and S122 each bind 5-phospho-alpha-D-ribose 1-diphosphate. G82 serves as a coordination point for anthranilate. Mg(2+) is bound at residue S94. Residue N113 coordinates anthranilate. An anthranilate-binding site is contributed by R168. Residues D227 and E228 each contribute to the Mg(2+) site.

Belongs to the anthranilate phosphoribosyltransferase family. As to quaternary structure, homodimer. Mg(2+) serves as cofactor.

The catalysed reaction is N-(5-phospho-beta-D-ribosyl)anthranilate + diphosphate = 5-phospho-alpha-D-ribose 1-diphosphate + anthranilate. Its pathway is amino-acid biosynthesis; L-tryptophan biosynthesis; L-tryptophan from chorismate: step 2/5. In terms of biological role, catalyzes the transfer of the phosphoribosyl group of 5-phosphorylribose-1-pyrophosphate (PRPP) to anthranilate to yield N-(5'-phosphoribosyl)-anthranilate (PRA). In Ruthia magnifica subsp. Calyptogena magnifica, this protein is Anthranilate phosphoribosyltransferase.